A 491-amino-acid polypeptide reads, in one-letter code: MTTSEVRVRFCPSPTGTPHVGLVRTALFNWAFARHNGGSFVFRIEDTDAARDSEESYQAILDALRWLGLNWDEGPEVGGPYEPYRQSQRRDLHLDVVAKLLAAGEAYESFSTPEEVEERHKAAGRDPKLGYDNFDRDLTPDQRQAFLDEGRKPVVRLRMPDHDLTWDDLVRGETTFKAGTVPDFALTRGNGIPLYTLVNPVDDALMKITHVLRGEDLLSSTPRQLALYEAMQRIGVADFTPRFGHLPFVMGQGNKKLSKRDPESNLFIHRDRGFVPEGLLNYLALLGWGISDDHDVFSLDEMVAAFDISKVNSNPARFDQKKADAINAEHIRLLEPADFAARLRAFLTLHGHLGETVDESVFATAAELVQTRIVVLSDAWDLLKFLFVDEADFAIDPAAAAKNLGADSAPVLDAALASLDAVEAWDAASLEEALKTALVDELGLKPRKAFAPVRVAVTGSHISPPLYESMELLGRDVSLSRLRSARAGVAG.

The short motif at 12-22 (PSPTGTPHVGL) is the 'HIGH' region element. Residues 111–134 (STPEEVEERHKAAGRDPKLGYDNF) form a disordered region. The span at 117–134 (EERHKAAGRDPKLGYDNF) shows a compositional bias: basic and acidic residues. Residues 256-260 (KLSKR) carry the 'KMSKS' region motif. K259 lines the ATP pocket.

Belongs to the class-I aminoacyl-tRNA synthetase family. Glutamate--tRNA ligase type 1 subfamily. As to quaternary structure, monomer.

It localises to the cytoplasm. It catalyses the reaction tRNA(Glu) + L-glutamate + ATP = L-glutamyl-tRNA(Glu) + AMP + diphosphate. In terms of biological role, catalyzes the attachment of glutamate to tRNA(Glu) in a two-step reaction: glutamate is first activated by ATP to form Glu-AMP and then transferred to the acceptor end of tRNA(Glu). The sequence is that of Glutamate--tRNA ligase from Rhodococcus jostii (strain RHA1).